The following is a 305-amino-acid chain: Protoheme IX farnesyltransferase 1 (305 aa).

A run of 9 helical transmembrane segments spans residues 30-50, 59-79, 108-128, 129-149, 154-176, 180-202, 232-252, 253-273, and 284-304; these read IGIV…AFQF, LDVI…SGAM, FVLT…FAAS, FAAG…YSMW, HVSN…FAAV, LGPG…FYAL, LFWI…GIGF, LTLA…GFTA, and FIYS…FAVF.

It belongs to the UbiA prenyltransferase family. Protoheme IX farnesyltransferase subfamily. In terms of assembly, interacts with CtaA.

The protein localises to the cell membrane. The catalysed reaction is heme b + (2E,6E)-farnesyl diphosphate + H2O = Fe(II)-heme o + diphosphate. Its pathway is porphyrin-containing compound metabolism; heme O biosynthesis; heme O from protoheme: step 1/1. Its function is as follows. Converts heme B (protoheme IX) to heme O by substitution of the vinyl group on carbon 2 of heme B porphyrin ring with a hydroxyethyl farnesyl side group. The polypeptide is Protoheme IX farnesyltransferase 1 (Lysinibacillus sphaericus (strain C3-41)).